A 293-amino-acid polypeptide reads, in one-letter code: uncharacterized protein (293 aa).

The HTH lysR-type domain maps to 1-60; the sequence is MHITLRQLEVFAEVLKSGSTTQASVMLALSQSAVSAALTDLEGQLGVQLFDRVGKRLVVN. Residues 20 to 39 constitute a DNA-binding region (H-T-H motif); it reads TTQASVMLALSQSAVSAALT.

The protein belongs to the LysR transcriptional regulatory family.

This is an uncharacterized protein from Escherichia coli O157:H7.